A 465-amino-acid chain; its full sequence is Cysteine--tRNA ligase (465 aa).

A Zn(2+)-binding site is contributed by Cys-30. A 'HIGH' region motif is present at residues 32-42; sequence ITVYDYCHVGH. 3 residues coordinate Zn(2+): Cys-214, His-239, and Glu-243. Positions 271-275 match the 'KMSKS' region motif; it reads KMSKS. Residue Lys-274 coordinates ATP.

The protein belongs to the class-I aminoacyl-tRNA synthetase family. As to quaternary structure, monomer. Zn(2+) is required as a cofactor.

The protein localises to the cytoplasm. It catalyses the reaction tRNA(Cys) + L-cysteine + ATP = L-cysteinyl-tRNA(Cys) + AMP + diphosphate. This chain is Cysteine--tRNA ligase, found in Burkholderia vietnamiensis (strain G4 / LMG 22486) (Burkholderia cepacia (strain R1808)).